The primary structure comprises 143 residues: Holo-[acyl-carrier-protein] synthase (143 aa).

Positions 8 and 62 each coordinate Mg(2+).

It belongs to the P-Pant transferase superfamily. AcpS family. Mg(2+) is required as a cofactor.

Its subcellular location is the cytoplasm. It catalyses the reaction apo-[ACP] + CoA = holo-[ACP] + adenosine 3',5'-bisphosphate + H(+). Functionally, transfers the 4'-phosphopantetheine moiety from coenzyme A to a Ser of acyl-carrier-protein. The protein is Holo-[acyl-carrier-protein] synthase of Cupriavidus metallidurans (strain ATCC 43123 / DSM 2839 / NBRC 102507 / CH34) (Ralstonia metallidurans).